Consider the following 118-residue polypeptide: Large ribosomal subunit protein bL19 (118 aa).

Belongs to the bacterial ribosomal protein bL19 family.

In terms of biological role, this protein is located at the 30S-50S ribosomal subunit interface and may play a role in the structure and function of the aminoacyl-tRNA binding site. This chain is Large ribosomal subunit protein bL19, found in Helicobacter pylori (strain G27).